Consider the following 335-residue polypeptide: Glycerol-3-phosphate dehydrogenase [NAD(P)+] (335 aa).

NADPH-binding residues include Ser10, Phe11, Arg31, and Lys105. Positions 105, 136, and 138 each coordinate sn-glycerol 3-phosphate. Residue Ala140 coordinates NADPH. Sn-glycerol 3-phosphate-binding residues include Lys191, Asp244, Ser254, Arg255, and Asn256. The active-site Proton acceptor is the Lys191. Arg255 serves as a coordination point for NADPH. NADPH-binding residues include Val279 and Glu281.

Belongs to the NAD-dependent glycerol-3-phosphate dehydrogenase family.

Its subcellular location is the cytoplasm. It catalyses the reaction sn-glycerol 3-phosphate + NAD(+) = dihydroxyacetone phosphate + NADH + H(+). The catalysed reaction is sn-glycerol 3-phosphate + NADP(+) = dihydroxyacetone phosphate + NADPH + H(+). It participates in membrane lipid metabolism; glycerophospholipid metabolism. Functionally, catalyzes the reduction of the glycolytic intermediate dihydroxyacetone phosphate (DHAP) to sn-glycerol 3-phosphate (G3P), the key precursor for phospholipid synthesis. The chain is Glycerol-3-phosphate dehydrogenase [NAD(P)+] from Leptospira borgpetersenii serovar Hardjo-bovis (strain JB197).